The following is a 208-amino-acid chain: Uracil phosphoribosyltransferase (208 aa).

5-phospho-alpha-D-ribose 1-diphosphate is bound by residues R78, R103, and 130 to 138 (DPMLATGGS). Uracil-binding positions include I193 and 198 to 200 (GDA). D199 is a binding site for 5-phospho-alpha-D-ribose 1-diphosphate.

This sequence belongs to the UPRTase family. Requires Mg(2+) as cofactor.

The catalysed reaction is UMP + diphosphate = 5-phospho-alpha-D-ribose 1-diphosphate + uracil. The protein operates within pyrimidine metabolism; UMP biosynthesis via salvage pathway; UMP from uracil: step 1/1. Its activity is regulated as follows. Allosterically activated by GTP. Catalyzes the conversion of uracil and 5-phospho-alpha-D-ribose 1-diphosphate (PRPP) to UMP and diphosphate. This Shewanella sediminis (strain HAW-EB3) protein is Uracil phosphoribosyltransferase.